We begin with the raw amino-acid sequence, 377 residues long: RIB43A-like with coiled-coils protein 2 (377 aa).

Coiled-coil stretches lie at residues 217 to 250 (NKNQ…LRGD) and 282 to 308 (EEIR…RDMD).

It belongs to the RIB43A family. Microtubule inner protein component of sperm flagellar doublet microtubules. As to expression, expressed in trachea multiciliated cells.

It is found in the cytoplasm. It localises to the cytoskeleton. The protein resides in the cilium axoneme. Its subcellular location is the flagellum axoneme. Its function is as follows. Microtubule inner protein (MIP) part of the dynein-decorated doublet microtubules (DMTs) in cilia axoneme, which is required for motile cilia beating. This Bos taurus (Bovine) protein is RIB43A-like with coiled-coils protein 2.